The sequence spans 241 residues: Class B acid phosphatase (241 aa).

An N-terminal signal peptide occupies residues Met-1–Ala-27. The active-site Nucleophile is the Asp-72. Residues Asp-72 and Asp-74 each coordinate Mg(2+). The Proton donor role is filled by Asp-74. Residues Thr-141–Gly-142 and Lys-181 contribute to the substrate site. Asp-196 lines the Mg(2+) pocket.

This sequence belongs to the class B bacterial acid phosphatase family. As to quaternary structure, homotetramer. Requires Mg(2+) as cofactor.

The protein resides in the periplasm. It carries out the reaction a phosphate monoester + H2O = an alcohol + phosphate. In terms of biological role, dephosphorylates several organic phosphate monoesters. Also has a phosphotransferase activity catalyzing the transfer of low-energy phosphate groups from organic phosphate monoesters to free hydroxyl groups of various organic compounds. This chain is Class B acid phosphatase, found in Edwardsiella ictaluri (strain 93-146).